The primary structure comprises 106 residues: ATP-dependent Clp protease adapter protein ClpS (106 aa).

The segment at 1–22 (MTDEPNQDDPQGPEVEAAKPSL) is disordered.

Belongs to the ClpS family. In terms of assembly, binds to the N-terminal domain of the chaperone ClpA.

Involved in the modulation of the specificity of the ClpAP-mediated ATP-dependent protein degradation. This chain is ATP-dependent Clp protease adapter protein ClpS, found in Halorhodospira halophila (strain DSM 244 / SL1) (Ectothiorhodospira halophila (strain DSM 244 / SL1)).